A 700-amino-acid polypeptide reads, in one-letter code: Putative glutamine-dependent NAD(+) synthetase (700 aa).

A CN hydrolase domain is found at 5–275 (VTIASCQLNQ…VEVISATVDV (271 aa)). The Proton acceptor; for glutaminase activity role is filled by Glu45. Lys114 functions as the For glutaminase activity in the catalytic mechanism. Residue Cys175 is the Nucleophile; for glutaminase activity of the active site. The interval 327 to 700 (IPLPEEEITF…ASKFEQHQRK (374 aa)) is ligase. 357–364 (PLSGGLDS) is an ATP binding site. Ser359 is an active-site residue.

This sequence in the C-terminal section; belongs to the NAD synthetase family.

The catalysed reaction is deamido-NAD(+) + L-glutamine + ATP + H2O = L-glutamate + AMP + diphosphate + NAD(+) + H(+). It functions in the pathway cofactor biosynthesis; NAD(+) biosynthesis; NAD(+) from deamido-NAD(+) (L-Gln route): step 1/1. This Schizosaccharomyces pombe (strain 972 / ATCC 24843) (Fission yeast) protein is Putative glutamine-dependent NAD(+) synthetase.